We begin with the raw amino-acid sequence, 370 residues long: Translocating chain-associated membrane protein 2 (370 aa).

Residues 1 to 22 (MAFRRRTKSYPLFSQEFVIHNH) lie on the Cytoplasmic side of the membrane. A helical membrane pass occupies residues 23 to 43 (ADIGFCLVLCVLIGLMFEVTA). Over 44-75 (KTAFLFILPQYNISVPTADSETVHYHYGPKDL) the chain is Extracellular. Asn-55 carries N-linked (GlcNAc...) asparagine glycosylation. Residues 76-96 (VTILFYIFITIILHAVVQEYI) form a helical membrane-spanning segment. At 97 to 119 (LDKISKRLHLSKVKHSKFNESGQ) the chain is on the cytoplasmic side. The TLC domain maps to 112 to 321 (SKFNESGQLV…HSQLRHWREY (210 aa)). A helical membrane pass occupies residues 120 to 140 (LVVFHFTSVIWCFYVVVTEGY). Topologically, residues 141-159 (LTNPRSLWEDYPHVHLPFQ) are extracellular. Residues 160 to 180 (VKFFYLCQLAYWLHALPELYF) form a helical membrane-spanning segment. The Cytoplasmic portion of the chain corresponds to 181–191 (QKVRKEEIPRQ). The helical transmembrane segment at 192-209 (LQYICLYLVHIAGAYLLN) threads the bilayer. The Extracellular segment spans residues 210-214 (LSRLG). Residues 215-235 (LILLLLQYSTEFLFHTARLFY) form a helical membrane-spanning segment. Residues 236–250 (FADENNEKLFSAWAA) lie on the Cytoplasmic side of the membrane. A helical membrane pass occupies residues 251-271 (VFGVTRLFILTLAVLAIGFGL). Over 272 to 287 (ARMENQAFDPEKGNFN) the chain is Extracellular. Residues 288–308 (TLFCRLCVLLLVCAAQAWLMW) form a helical membrane-spanning segment. Residues 309–370 (RFIHSQLRHW…SPRTKKLKSP (62 aa)) lie on the Cytoplasmic side of the membrane. The tract at residues 348-370 (YHENGVVKAENGTSPRTKKLKSP) is disordered.

It belongs to the TRAM family. In terms of assembly, interacts with SERCA2B and COL1A1.

It is found in the membrane. Functionally, necessary for collagen type I synthesis. May couple the activity of the ER Ca(2+) pump SERCA2B with the activity of the translocon. This coupling may increase the local Ca(2+) concentration at the site of collagen synthesis, and a high Ca(2+) concentration may be necessary for the function of molecular chaperones involved in collagen folding. Required for proper insertion of the first transmembrane helix N-terminus of TM4SF20 into the ER lumen, may act as a ceramide sensor for regulated alternative translocation (RAT). The sequence is that of Translocating chain-associated membrane protein 2 (TRAM2) from Homo sapiens (Human).